Consider the following 158-residue polypeptide: Lipoprotein signal peptidase (158 aa).

4 helical membrane-spanning segments follow: residues 7–27 (LFWIAAFIAFFVDQLTKYWVV), 38–58 (ILPGIFHFTYVTNTGAAFSLF), 67–87 (WLSLGVSLLLIGLALLGPVLD), and 95–115 (GLILGGAMGNGIDRFALGYVV). Residues D116 and D132 contribute to the active site. Residues 125 to 145 (FAVFNMADSFISIGIVCLLLA) traverse the membrane as a helical segment.

It belongs to the peptidase A8 family.

The protein resides in the cell inner membrane. The catalysed reaction is Release of signal peptides from bacterial membrane prolipoproteins. Hydrolyzes -Xaa-Yaa-Zaa-|-(S,diacylglyceryl)Cys-, in which Xaa is hydrophobic (preferably Leu), and Yaa (Ala or Ser) and Zaa (Gly or Ala) have small, neutral side chains.. Its pathway is protein modification; lipoprotein biosynthesis (signal peptide cleavage). Its function is as follows. This protein specifically catalyzes the removal of signal peptides from prolipoproteins. This Nostoc sp. (strain PCC 7120 / SAG 25.82 / UTEX 2576) protein is Lipoprotein signal peptidase.